The primary structure comprises 528 residues: Glucans biosynthesis protein G 2 (528 aa).

An N-terminal signal peptide occupies residues 1–44; that stretch reads MRLHLTFNHSTPATGRKNTKHTLFFGSMLACIISIISLVVPAYG.

It belongs to the OpgD/OpgG family.

It is found in the periplasm. It functions in the pathway glycan metabolism; osmoregulated periplasmic glucan (OPG) biosynthesis. Functionally, involved in the biosynthesis of osmoregulated periplasmic glucans (OPGs). The sequence is that of Glucans biosynthesis protein G 2 (opgG2) from Shewanella oneidensis (strain ATCC 700550 / JCM 31522 / CIP 106686 / LMG 19005 / NCIMB 14063 / MR-1).